Consider the following 216-residue polypeptide: MSLPMLQVALDNQTMDSAYETTRLIAEEVDIIEVGTILCVGEGVRAVRDLKALYPHKIVLADAKIADAGKILSRMCFEANADWVTVICCADINTAKGALDVAKEFNGDVQIELTGYWTWEQAQQWRDAGIQQVVYHRSCDAQAAGVAWGEADITAIKRLSDMGFKVTVTGGLALEDLPLFKGIPIHVFIAGRSIRDAESPVEAARQFKRSIAQLWG.

Aspartate 11 is a binding site for substrate. Glutamate 33 and aspartate 62 together coordinate Mg(2+). Arginine 192 serves as a coordination point for substrate.

The protein belongs to the HPS/KGPDC family. KGPDC subfamily. In terms of assembly, homodimer. Mg(2+) serves as cofactor.

It catalyses the reaction 3-dehydro-L-gulonate 6-phosphate + H(+) = L-xylulose 5-phosphate + CO2. It functions in the pathway cofactor degradation; L-ascorbate degradation; D-xylulose 5-phosphate from L-ascorbate: step 2/4. Catalyzes the decarboxylation of 3-keto-L-gulonate-6-P into L-xylulose-5-P. Is involved in the anaerobic L-ascorbate utilization. This is 3-keto-L-gulonate-6-phosphate decarboxylase UlaD from Salmonella typhi.